The chain runs to 690 residues: MPRVHAIEDYRNFGIMAHIDAGKTTTTERILFYTGKSHKIGEVHEGAATMDWMAQEQERGITITSAATTAFWNGKRLNIIDTPGHVDFTIEVERSLRVLDGAVCVLDSNQGVEPQTETVWRQGDKYRVPRIVFANKMDKTGADFFKCLQDIVDRLGAKPVAIQLPIGSENNFKGLIDLVRMKAVVWNDESLGAKFEDTDIPEDLLEQAKEYREKMIEAAVELDDDAMAAYLDGKEPDEATLKRLIRKAVLNGAFYPVLCGSAFKNKGVQPLLDAVVDYLPSPVDVPAIKGIDEDGNEVVRKADDSEPLALLAFKIMDDPFVGTITFCRIYSGVLQSGTGVVNSTREKKERIGRMLLMHANNREDIKEAYAGDIVALAGLKEARTGDTLCDPAKPVILEKMEFPEPVIEIAIEPKSKADQEKLGVALAKLAAEDPSFRVSTDIESGQTILKGMGELHLDIKVDILKRTYKVDANIGAPQVAFRERITKKAEVDYTHKKQTGGTGQFAAVSFIVEPNEPGAGYEFISKVVGGSVPKEYIPGVEKGIESVLGSGVVAGFPVVDVKVTLVDGKYHDVDSSALAFEIASRAAFREALQKGKSVLLEPIMKVECVTPEDYTGSVIGDLNSRRGQIQGQDMRGNANVINAMVPLMNMFGYVNNLRSMSQGRATFTMQFDHYAEAPANVSAEVQKKFA.

The region spanning Glu-8 to Val-283 is the tr-type G domain. Residues Ala-17–Thr-24, Asp-81–His-85, and Asn-135–Asp-138 contribute to the GTP site.

The protein belongs to the TRAFAC class translation factor GTPase superfamily. Classic translation factor GTPase family. EF-G/EF-2 subfamily.

The protein localises to the cytoplasm. Catalyzes the GTP-dependent ribosomal translocation step during translation elongation. During this step, the ribosome changes from the pre-translocational (PRE) to the post-translocational (POST) state as the newly formed A-site-bound peptidyl-tRNA and P-site-bound deacylated tRNA move to the P and E sites, respectively. Catalyzes the coordinated movement of the two tRNA molecules, the mRNA and conformational changes in the ribosome. This Rhodopseudomonas palustris (strain HaA2) protein is Elongation factor G.